The sequence spans 227 residues: ATP-dependent dethiobiotin synthetase BioD (227 aa).

13 to 18 (DIGKTY) contacts ATP. Thr17 contributes to the Mg(2+) binding site. Lys38 is a catalytic residue. Ser42 contributes to the substrate binding site. ATP is bound by residues Asp55, 116–119 (EGSG), and 179–180 (NN). Mg(2+) contacts are provided by Asp55 and Glu116.

It belongs to the dethiobiotin synthetase family. In terms of assembly, homodimer. Mg(2+) is required as a cofactor.

Its subcellular location is the cytoplasm. It carries out the reaction (7R,8S)-7,8-diammoniononanoate + CO2 + ATP = (4R,5S)-dethiobiotin + ADP + phosphate + 3 H(+). It functions in the pathway cofactor biosynthesis; biotin biosynthesis; biotin from 7,8-diaminononanoate: step 1/2. Functionally, catalyzes a mechanistically unusual reaction, the ATP-dependent insertion of CO2 between the N7 and N8 nitrogen atoms of 7,8-diaminopelargonic acid (DAPA, also called 7,8-diammoniononanoate) to form a ureido ring. In Clostridium botulinum (strain Eklund 17B / Type B), this protein is ATP-dependent dethiobiotin synthetase BioD.